We begin with the raw amino-acid sequence, 911 residues long: Bifunctional aspartokinase/homoserine dehydrogenase 1, chloroplastic (911 aa).

The transit peptide at 1–82 directs the protein to the chloroplast; sequence MPVVSLAKVV…VENGHLPKGD (82 aa). The interval 83–331 is aspartokinase; that stretch reads SWAVHKFGGT…VSEAVVLKTL (249 aa). The interface stretch occupies residues 332-557; sequence SYQEAWEMSY…LSRTTLAVGI (226 aa). 2 ACT domains span residues 407-482 and 488-565; these read VEGT…IIPN and AVGQ…LIGG. Positions 558 to 911 are homoserine dehydrogenase; that stretch reads IGPGLIGGTL…RLAFYLGAPS (354 aa). Residues Ile563 and Thr644 each contribute to the NAD(+) site. Ile563, Thr644, and Lys668 together coordinate NADP(+). Positions 563, 644, and 668 each coordinate NADPH. Residues Glu695, Val698, Ala700, and Leu702 each coordinate Na(+). NADP(+)-binding residues include Gly753 and Glu756. Glu756 and Asp767 together coordinate L-homoserine. Lys771 (proton donor) is an active-site residue. Residue Gly888 participates in NAD(+) binding. Gly888 contacts NADP(+). Gly888 contributes to the NADPH binding site.

This sequence in the N-terminal section; belongs to the aspartokinase family. It in the C-terminal section; belongs to the homoserine dehydrogenase family. Homo- or heterodimer. A metal cation is required as a cofactor.

The protein localises to the plastid. It is found in the chloroplast. It carries out the reaction L-homoserine + NADP(+) = L-aspartate 4-semialdehyde + NADPH + H(+). It catalyses the reaction L-homoserine + NAD(+) = L-aspartate 4-semialdehyde + NADH + H(+). The enzyme catalyses L-aspartate + ATP = 4-phospho-L-aspartate + ADP. It functions in the pathway amino-acid biosynthesis; L-lysine biosynthesis via DAP pathway; (S)-tetrahydrodipicolinate from L-aspartate: step 1/4. It participates in amino-acid biosynthesis; L-methionine biosynthesis via de novo pathway; L-homoserine from L-aspartate: step 1/3. Its pathway is amino-acid biosynthesis; L-methionine biosynthesis via de novo pathway; L-homoserine from L-aspartate: step 3/3. The protein operates within amino-acid biosynthesis; L-threonine biosynthesis; L-threonine from L-aspartate: step 1/5. It functions in the pathway amino-acid biosynthesis; L-threonine biosynthesis; L-threonine from L-aspartate: step 3/5. Inhibition of aspartate kinase activity by threonine and leucine and 3-fold activation by cysteine, isoleucine, valine, serine and alanine at 2.5 mM. Partial inhibition of homoserine dehydrogenase activity by threonine and cysteine (14% of activity remaining at saturation with either amino acid). No synergy between the effectors for both activation or inhibition. Bifunctional aspartate kinase and homoserine dehydrogenase that catalyzes the first and the third steps toward the synthesis of lysine, methionine and threonine from aspartate. This Arabidopsis thaliana (Mouse-ear cress) protein is Bifunctional aspartokinase/homoserine dehydrogenase 1, chloroplastic.